Here is a 901-residue protein sequence, read N- to C-terminus: Protein translocase subunit SecA (901 aa).

ATP contacts are provided by residues Gln87, 105 to 109 (GEGKT), and Asp512. The disordered stretch occupies residues 839–901 (QMEEQRRQES…KYKQCHGRLA (63 aa)). The segment covering 841–850 (EEQRRQESER) has biased composition (basic and acidic residues). Zn(2+)-binding residues include Cys885, Cys887, Cys896, and His897. Basic residues predominate over residues 891-901 (KKYKQCHGRLA).

Belongs to the SecA family. As to quaternary structure, monomer and homodimer. Part of the essential Sec protein translocation apparatus which comprises SecA, SecYEG and auxiliary proteins SecDF-YajC and YidC. The cofactor is Zn(2+).

Its subcellular location is the cell inner membrane. The protein resides in the cytoplasm. The catalysed reaction is ATP + H2O + cellular proteinSide 1 = ADP + phosphate + cellular proteinSide 2.. Functionally, part of the Sec protein translocase complex. Interacts with the SecYEG preprotein conducting channel. Has a central role in coupling the hydrolysis of ATP to the transfer of proteins into and across the cell membrane, serving both as a receptor for the preprotein-SecB complex and as an ATP-driven molecular motor driving the stepwise translocation of polypeptide chains across the membrane. The chain is Protein translocase subunit SecA from Erwinia tasmaniensis (strain DSM 17950 / CFBP 7177 / CIP 109463 / NCPPB 4357 / Et1/99).